The following is a 295-amino-acid chain: Thioredoxin-related transmembrane protein 2 (295 aa).

An N-terminal signal peptide occupies residues 1–48; sequence MAVLAPLIALVYSVPRLSRWLARPYCLLSALLSIAFLLVRKLPPICNG. At 49-102 the chain is on the extracellular side; sequence LPTQREDGNPCDFDWREVEILMFLSAIVMMKNRRSITVEQHVGNIFMFSKVANA. A helical membrane pass occupies residues 103–125; sequence ILFFRLDIRMGLLYLTLCIVFLM. The region spanning 114–269 is the Thioredoxin domain; the sequence is LLYLTLCIVF…LYQRAKKLSK (156 aa). Residues 126 to 295 are Cytoplasmic-facing; it reads TCKPPLYMGP…VPDGENKKDK (170 aa). A phosphoserine mark is found at S211 and S243. The disordered stretch occupies residues 266–295; sequence KLSKGGDMSEEKPGNPTPTAVPDGENKKDK. The short motif at 292-295 is the Di-lysine motif element; that stretch reads KKDK.

In terms of assembly, monomer. Homodimer; disulfide-linked. Occurs in both reduced and oxidized monomeric form. Oxidative conditions increase homodimerization. Interacts with CANX. Interacts with ATP2A2.

It localises to the endoplasmic reticulum membrane. The protein resides in the mitochondrion membrane. Its function is as follows. Endoplasmic reticulum and mitochondria-associated protein that probably functions as a regulator of cellular redox state and thereby regulates protein post-translational modification, protein folding and mitochondrial activity. Indirectly regulates neuronal proliferation, migration, and organization in the developing brain. In Rattus norvegicus (Rat), this protein is Thioredoxin-related transmembrane protein 2 (Tmx2).